The primary structure comprises 639 residues: Lipoteichoic acid synthase 1 (639 aa).

Residues 1–3 are Cytoplasmic-facing; sequence MKK. A helical transmembrane segment spans residues 4-24; it reads LFSYKLSFFVLAVILFWAKTY. The Extracellular segment spans residues 25–41; sequence LSYKTEFNLGVKGTTQE. Residues 42–62 traverse the membrane as a helical segment; sequence ILLIFNPFSSAVFFLGLALLA. Topologically, residues 63-67 are cytoplasmic; the sequence is KGRKS. A helical membrane pass occupies residues 68-88; the sequence is AIIMLIIDFLMTFVLYANILF. Residues 89–116 lie on the Extracellular side of the membrane; that stretch reads YRFFDDFLTFPNIKQSGNVGNMGDGIFS. The helical transmembrane segment at 117–137 threads the bilayer; sequence IMAGHDIFYFLDIIILIAVLI. Topologically, residues 138-150 are cytoplasmic; it reads WRPELKEYKMKKR. The chain crosses the membrane as a helical span at residues 151 to 171; it reads FASLVILSGIALFFINLHYAE. At 172-639 the chain is on the extracellular side; that stretch reads KDRPQLLTRT…YHYGKEKEIK (468 aa). Mn(2+)-binding residues include E252 and T297. The active site involves T297. Position 413 (H413) interacts with substrate. Positions 472 and 473 each coordinate Mn(2+).

Belongs to the LTA synthase family. In terms of processing, proteolytically cleaved by the type I signal peptidases SipT and SipV.

The protein resides in the cell membrane. Its subcellular location is the secreted. Its pathway is cell wall biogenesis; lipoteichoic acid biosynthesis. In terms of biological role, catalyzes the polymerization of lipoteichoic acid (LTA) polyglycerol phosphate, a reaction that presumably uses phosphatidylglycerol (PG) as substrate. This chain is Lipoteichoic acid synthase 1 (ltaS1), found in Bacillus subtilis (strain 168).